We begin with the raw amino-acid sequence, 529 residues long: Putative UPF0481 protein At3g02645 (529 aa).

N-linked (GlcNAc...) asparagine glycosylation is found at Asn-365 and Asn-403. The helical transmembrane segment at 498-518 (ILAFLAAVLLLMLVSLQLFSL) threads the bilayer.

The protein belongs to the UPF0481 family.

The protein resides in the membrane. The chain is Putative UPF0481 protein At3g02645 from Arabidopsis thaliana (Mouse-ear cress).